A 38-amino-acid chain; its full sequence is Glucagon-like peptide (38 aa).

This sequence belongs to the glucagon family.

Its subcellular location is the secreted. The sequence is that of Glucagon-like peptide from Hydrolagus colliei (Spotted ratfish).